The primary structure comprises 340 residues: Large ribosomal subunit protein uL10 (340 aa).

The segment at A305–G340 is disordered. The span at K312–A331 shows a compositional bias: acidic residues.

It belongs to the universal ribosomal protein uL10 family. As to quaternary structure, part of the 50S ribosomal subunit. Forms part of the ribosomal stalk which helps the ribosome interact with GTP-bound translation factors. Forms a heptameric L10(L12)2(L12)2(L12)2 complex, where L10 forms an elongated spine to which the L12 dimers bind in a sequential fashion.

Forms part of the ribosomal stalk, playing a central role in the interaction of the ribosome with GTP-bound translation factors. This chain is Large ribosomal subunit protein uL10, found in Thermococcus gammatolerans (strain DSM 15229 / JCM 11827 / EJ3).